A 280-amino-acid chain; its full sequence is H-2 class II histocompatibility antigen gamma chain (280 aa).

Residues 1–30 (MDDQRDLISNHEQLPILGQRARAPESNCNR) are Cytoplasmic-facing. Position 9 is a phosphoserine (Ser9). Residues 31–56 (GVLYTSVSVLVALLLAGQATTAYFLY) traverse the membrane as a helical; Signal-anchor for type II membrane protein segment. Over 57–280 (QQQGRLDKLT…TKQDMGQMFL (224 aa)) the chain is Extracellular. Asn114 and Asn120 each carry an N-linked (GlcNAc...) asparagine glycan. A Thyroglobulin type-1 domain is found at 194-255 (LTKCQEEVSH…HTKSRGRHNC (62 aa)). 3 cysteine pairs are disulfide-bonded: Cys197–Cys216, Cys227–Cys234, and Cys236–Cys255. The disordered stretch occupies residues 246–268 (HTKSRGRHNCSEPLDMEDPSSGL). Residue Ser266 is glycosylated (O-linked (Xyl...) (chondroitin sulfate) serine).

In terms of assembly, nonamer composed of three alpha/beta/gamma heterotrimers. Interacts with CD44; this complex is essential for the MIF-induced signaling cascade that results in B cell survival. As to quaternary structure, interacts with the mature form of CTSL; the complex survive in neutral pH environment.

Its subcellular location is the late endosome. It localises to the lysosome. The protein resides in the cell membrane. It is found in the endoplasmic reticulum membrane. The protein localises to the golgi apparatus. Its subcellular location is the trans-Golgi network. It localises to the endosome. The protein resides in the secreted. Functionally, plays a critical role in MHC class II antigen processing by stabilizing peptide-free class II alpha/beta heterodimers in a complex soon after their synthesis and directing transport of the complex from the endoplasmic reticulum to compartments where peptide loading of class II takes place. Enhance also the stimulation of T-cell responses through interaction with CD44. Its function is as follows. Binds to the peptide-binding site of MHC class II alpha/beta heterodimers forming an alpha-beta-CLIP complex, thereby preventing the loading of antigenic peptides to the MHC class II complex until its release by HLA-DM in the endosome. Stabilizes the conformation of mature CTSL by binding to its active site and serving as a chaperone to help maintain a pool of mature enzyme in endocytic compartments and extracellular space of antigen-presenting cells (APCs). This Rattus norvegicus (Rat) protein is H-2 class II histocompatibility antigen gamma chain.